The chain runs to 289 residues: 4-diphosphocytidyl-2-C-methyl-D-erythritol kinase (289 aa).

Residue Lys13 is part of the active site. 101–111 (PMGGGLGGGSS) provides a ligand contact to ATP. Residue Asp143 is part of the active site.

It belongs to the GHMP kinase family. IspE subfamily.

The enzyme catalyses 4-CDP-2-C-methyl-D-erythritol + ATP = 4-CDP-2-C-methyl-D-erythritol 2-phosphate + ADP + H(+). It functions in the pathway isoprenoid biosynthesis; isopentenyl diphosphate biosynthesis via DXP pathway; isopentenyl diphosphate from 1-deoxy-D-xylulose 5-phosphate: step 3/6. Catalyzes the phosphorylation of the position 2 hydroxy group of 4-diphosphocytidyl-2C-methyl-D-erythritol. The sequence is that of 4-diphosphocytidyl-2-C-methyl-D-erythritol kinase from Janthinobacterium sp. (strain Marseille) (Minibacterium massiliensis).